A 255-amino-acid chain; its full sequence is Dehydrogenase/reductase SDR family member 11 (255 aa).

The first 23 residues, 1–23, serve as a signal peptide directing secretion; sequence MERWTGRVALVTGASVGIGAAVA. NADP(+)-binding positions include 13-18, 38-39, Glu44, 65-66, and Asn92; these read GASVGI, RS, and DL. Residues Ser146 and Tyr161 each coordinate substrate. Residues Tyr161, Lys165, 196 to 199, and Lys203 contribute to the NADP(+) site; that span reads VETG. The active-site Proton acceptor is the Tyr161.

The protein belongs to the short-chain dehydrogenases/reductases (SDR) family.

It is found in the secreted. It carries out the reaction a 3beta-hydroxysteroid + NADP(+) = a 3-oxosteroid + NADPH + H(+). The enzyme catalyses 17beta-estradiol + NAD(+) = estrone + NADH + H(+). The catalysed reaction is 17beta-estradiol + NADP(+) = estrone + NADPH + H(+). It participates in steroid biosynthesis; estrogen biosynthesis. With respect to regulation, inhibited by flavonoids including apigenin, luteolin, genistein, kaempferol and quercetin and also by carbenoxolone, zearalenone, glycyrrhetinic, curcumin and flufenamic acid. Catalyzes the conversion of the 17-keto group of estrone, 4- and 5-androstenes and 5-alpha-androstanes into their 17-beta-hydroxyl metabolites and the conversion of the 3-keto group of 3-, 3,17- and 3,20- diketosteroids into their 3-hydroxyl metabolites. Exhibits reductive 3-beta-hydroxysteroid dehydrogenase activity toward 5-beta-androstanes, 5-beta-pregnanes, 4-pregnenes and bile acids. May also reduce endogenous and exogenous alpha-dicarbonyl compounds and xenobiotic alicyclic ketones. In Gallus gallus (Chicken), this protein is Dehydrogenase/reductase SDR family member 11 (DHRS11).